The following is a 75-amino-acid chain: Sec-independent protein translocase protein TatA (75 aa).

The helical transmembrane segment at 1-21 (MFGLSPAQLIILLVVILLIFG) threads the bilayer.

Belongs to the TatA/E family. In terms of assembly, the Tat system comprises two distinct complexes: a TatABC complex, containing multiple copies of TatA, TatB and TatC subunits, and a separate TatA complex, containing only TatA subunits. Substrates initially bind to the TatABC complex, which probably triggers association of the separate TatA complex to form the active translocon.

The protein localises to the cell inner membrane. Functionally, part of the twin-arginine translocation (Tat) system that transports large folded proteins containing a characteristic twin-arginine motif in their signal peptide across membranes. TatA could form the protein-conducting channel of the Tat system. The chain is Sec-independent protein translocase protein TatA from Haemophilus influenzae (strain PittEE).